A 149-amino-acid chain; its full sequence is Large ribosomal subunit protein uL11 (149 aa).

Belongs to the universal ribosomal protein uL11 family. Part of the ribosomal stalk of the 50S ribosomal subunit. Interacts with L10 and the large rRNA to form the base of the stalk. L10 forms an elongated spine to which L12 dimers bind in a sequential fashion forming a multimeric L10(L12)X complex. One or more lysine residues are methylated.

Forms part of the ribosomal stalk which helps the ribosome interact with GTP-bound translation factors. The chain is Large ribosomal subunit protein uL11 from Azorhizobium caulinodans (strain ATCC 43989 / DSM 5975 / JCM 20966 / LMG 6465 / NBRC 14845 / NCIMB 13405 / ORS 571).